We begin with the raw amino-acid sequence, 329 residues long: Red chlorophyll catabolite reductase 1, chloroplastic (329 aa).

Pro residues predominate over residues 1 to 11 (MLQLRSPPPAT). The transit peptide at 1-50 (MLQLRSPPPATSSPSSAVSFPTLAPRLLPLRRRRRGAGSQLGGKTSSAVR) directs the protein to the chloroplast. The disordered stretch occupies residues 1–61 (MLQLRSPPPA…SSAAAPGATE (61 aa)). Composition is skewed to low complexity over residues 12 to 28 (SSPS…PRLL) and 46 to 59 (SSAV…APGA). Red chlorophyll catabolite contacts are provided by residues E163, 216–218 (YRS), and D299.

As to expression, expressed in leaves. Expressed at low levels in roots, stems, panicles and seeds.

It localises to the plastid. The protein resides in the chloroplast. It catalyses the reaction primary fluorescent chlorophyll catabolite + 2 oxidized [2Fe-2S]-[ferredoxin] = red chlorophyll catabolite + 2 reduced [2Fe-2S]-[ferredoxin] + 3 H(+). The protein operates within porphyrin-containing compound metabolism; chlorophyll degradation. Functionally, catalyzes the key reaction of chlorophyll catabolism, porphyrin macrocycle cleavage of pheophorbide a (pheide a) to a primary fluorescent catabolite (pFCC). Works in a two-step reaction with pheophorbide a oxygenase (PaO) by reducing the C20/C1 double bond of the intermediate, RCC. Belongs to the chlorophyll catabolic enzymes (CCEs). May play a role in senescence and response to wounding. This chain is Red chlorophyll catabolite reductase 1, chloroplastic, found in Oryza sativa subsp. japonica (Rice).